The primary structure comprises 267 residues: MKKVTIRDFIKKKSTKEKITMLTAYDYPTAKIISNTGLDSILVGDSLGMVVLGYANTLNVTMRDMISHTRAVARANPPQLIVADMPFLSYEIDTKSAVKNAGLLVKAGSDAIKLEGGEEMKDTVKAIVKAGIPVMGHIGLTPQRFLRLGGFRTIGKTKQEEDQLIKDSLELEDAGVFSLVIENTYVDIAKRITEKLNIPTICIGAGPYCDGQVLVINDLLGLSEFTPYFAKSYVNLKEIISNAINQYIIDVKNNKFPEKQHYKERES.

Asp45 and Asp84 together coordinate Mg(2+). 3-methyl-2-oxobutanoate is bound by residues 45–46 (DS), Asp84, and Lys113. Glu115 is a Mg(2+) binding site. The active-site Proton acceptor is Glu182.

The protein belongs to the PanB family. In terms of assembly, homodecamer; pentamer of dimers. Mg(2+) serves as cofactor.

The protein resides in the cytoplasm. It catalyses the reaction 3-methyl-2-oxobutanoate + (6R)-5,10-methylene-5,6,7,8-tetrahydrofolate + H2O = 2-dehydropantoate + (6S)-5,6,7,8-tetrahydrofolate. The protein operates within cofactor biosynthesis; coenzyme A biosynthesis. Catalyzes the reversible reaction in which hydroxymethyl group from 5,10-methylenetetrahydrofolate is transferred onto alpha-ketoisovalerate to form ketopantoate. The chain is 3-methyl-2-oxobutanoate hydroxymethyltransferase from Saccharolobus islandicus (strain Y.G.57.14 / Yellowstone #1) (Sulfolobus islandicus).